Here is a 149-residue protein sequence, read N- to C-terminus: Ribosomal RNA large subunit methyltransferase H (149 aa).

S-adenosyl-L-methionine contacts are provided by residues L71, G98, and 117 to 122; that span reads LSKLTL.

Belongs to the RNA methyltransferase RlmH family. In terms of assembly, homodimer.

The protein resides in the cytoplasm. The catalysed reaction is pseudouridine(1915) in 23S rRNA + S-adenosyl-L-methionine = N(3)-methylpseudouridine(1915) in 23S rRNA + S-adenosyl-L-homocysteine + H(+). Specifically methylates the pseudouridine at position 1915 (m3Psi1915) in 23S rRNA. The protein is Ribosomal RNA large subunit methyltransferase H of Campylobacter jejuni subsp. jejuni serotype O:6 (strain 81116 / NCTC 11828).